We begin with the raw amino-acid sequence, 736 residues long: 1,4-alpha-glucan branching enzyme GlgB (736 aa).

Residue D415 is the Nucleophile of the active site. The active-site Proton donor is E468.

Belongs to the glycosyl hydrolase 13 family. GlgB subfamily. In terms of assembly, monomer.

It catalyses the reaction Transfers a segment of a (1-&gt;4)-alpha-D-glucan chain to a primary hydroxy group in a similar glucan chain.. It participates in glycan biosynthesis; glycogen biosynthesis. In terms of biological role, catalyzes the formation of the alpha-1,6-glucosidic linkages in glycogen by scission of a 1,4-alpha-linked oligosaccharide from growing alpha-1,4-glucan chains and the subsequent attachment of the oligosaccharide to the alpha-1,6 position. This is 1,4-alpha-glucan branching enzyme GlgB from Rhodopirellula baltica (strain DSM 10527 / NCIMB 13988 / SH1).